We begin with the raw amino-acid sequence, 101 residues long: Phosphoprotein OPG062 (101 aa).

Residues 51–73 form a disordered region; sequence PSSPACERRPSSPSRCERMNNPR. Residues S53 and S62 each carry the phosphoserine modification. The span at 56-70 shows a compositional bias: basic and acidic residues; it reads CERRPSSPSRCERMN.

The protein belongs to the orthopoxvirus OPG062 family. In terms of assembly, self-associates to form high molecular-weight forms. Interacts with protein OPG157/A30. Interacts with host RICTOR and RPTOR; these interactions disrupt the mTORC1 and mTORC2 crosstalk. In terms of processing, phosphorylated on two serines. While these phosphorylations do not play a role in virion assembly; they are essential for the interaction with host RICTOR and RPTOR.

The protein localises to the virion. Its function is as follows. Plays an essential role in virion assembly and morphogenesis. Also plays a role in the inhibition of host immune response by dysregulating mTOR. Sequesters host RICTOR and RPTOR, thereby disrupting mTORC1 and mTORC2 crosstalk. In turn, blocks the host antiviral response in part through mTOR-dependent degradation of cGAS, the primary poxvirus sensor. This is Phosphoprotein OPG062 (OPG062) from Vaccinia virus (strain Western Reserve) (VACV).